We begin with the raw amino-acid sequence, 175 residues long: Deoxyuridine 5'-triphosphate nucleotidohydrolase (175 aa).

Substrate contacts are provided by residues 67 to 69 (RSG), Asn80, 84 to 86 (TVD), and Lys94. The interval 138 to 175 (RAEGGFGSTGGHAAVGADTNGQQGGNRYASVVSDRKGQ) is disordered.

This sequence belongs to the dUTPase family. It depends on Mg(2+) as a cofactor.

The enzyme catalyses dUTP + H2O = dUMP + diphosphate + H(+). Its pathway is pyrimidine metabolism; dUMP biosynthesis; dUMP from dCTP (dUTP route): step 2/2. In terms of biological role, this enzyme is involved in nucleotide metabolism: it produces dUMP, the immediate precursor of thymidine nucleotides and it decreases the intracellular concentration of dUTP so that uracil cannot be incorporated into DNA. The chain is Deoxyuridine 5'-triphosphate nucleotidohydrolase from Streptomyces avermitilis (strain ATCC 31267 / DSM 46492 / JCM 5070 / NBRC 14893 / NCIMB 12804 / NRRL 8165 / MA-4680).